The primary structure comprises 186 residues: TATA-box-binding protein E (186 aa).

2 consecutive repeat copies span residues Ile10–Leu86 and Val101–Leu179.

Belongs to the TBP family.

General factor that plays a role in the activation of archaeal genes transcribed by RNA polymerase. Binds specifically to the TATA box promoter element which lies close to the position of transcription initiation. The polypeptide is TATA-box-binding protein E (tbpE) (Halobacterium salinarum (strain ATCC 700922 / JCM 11081 / NRC-1) (Halobacterium halobium)).